Here is a 201-residue protein sequence, read N- to C-terminus: Nucleoside triphosphate pyrophosphatase (201 aa).

The Proton acceptor role is filled by aspartate 77.

The protein belongs to the Maf family. Requires a divalent metal cation as cofactor.

It localises to the cytoplasm. It carries out the reaction a ribonucleoside 5'-triphosphate + H2O = a ribonucleoside 5'-phosphate + diphosphate + H(+). The catalysed reaction is a 2'-deoxyribonucleoside 5'-triphosphate + H2O = a 2'-deoxyribonucleoside 5'-phosphate + diphosphate + H(+). Nucleoside triphosphate pyrophosphatase. May have a dual role in cell division arrest and in preventing the incorporation of modified nucleotides into cellular nucleic acids. In Rickettsia akari (strain Hartford), this protein is Nucleoside triphosphate pyrophosphatase.